The chain runs to 98 residues: NADH-ubiquinone oxidoreductase chain 4L (98 aa).

3 helical membrane passes run 1–21 (MPYI…GTLM), 29–49 (SLLC…LLSL), and 61–81 (LILL…LIMI).

This sequence belongs to the complex I subunit 4L family. In terms of assembly, core subunit of respiratory chain NADH dehydrogenase (Complex I) which is composed of 45 different subunits.

The protein localises to the mitochondrion inner membrane. The catalysed reaction is a ubiquinone + NADH + 5 H(+)(in) = a ubiquinol + NAD(+) + 4 H(+)(out). Its function is as follows. Core subunit of the mitochondrial membrane respiratory chain NADH dehydrogenase (Complex I) which catalyzes electron transfer from NADH through the respiratory chain, using ubiquinone as an electron acceptor. Part of the enzyme membrane arm which is embedded in the lipid bilayer and involved in proton translocation. In Mammuthus primigenius (Siberian woolly mammoth), this protein is NADH-ubiquinone oxidoreductase chain 4L (MT-ND4L).